Here is a 257-residue protein sequence, read N- to C-terminus: 3-methyl-2-oxobutanoate hydroxymethyltransferase (257 aa).

The Mg(2+) site is built by Asp-42 and Asp-81. 3-methyl-2-oxobutanoate-binding positions include 42–43 (DS), Asp-81, and Lys-110. Glu-112 is a Mg(2+) binding site. Catalysis depends on Glu-176, which acts as the Proton acceptor.

The protein belongs to the PanB family. Homodecamer; pentamer of dimers. Requires Mg(2+) as cofactor.

It is found in the cytoplasm. It carries out the reaction 3-methyl-2-oxobutanoate + (6R)-5,10-methylene-5,6,7,8-tetrahydrofolate + H2O = 2-dehydropantoate + (6S)-5,6,7,8-tetrahydrofolate. Its pathway is cofactor biosynthesis; (R)-pantothenate biosynthesis; (R)-pantoate from 3-methyl-2-oxobutanoate: step 1/2. In terms of biological role, catalyzes the reversible reaction in which hydroxymethyl group from 5,10-methylenetetrahydrofolate is transferred onto alpha-ketoisovalerate to form ketopantoate. This Pelagibacter ubique (strain HTCC1062) protein is 3-methyl-2-oxobutanoate hydroxymethyltransferase.